The chain runs to 453 residues: Ribulose bisphosphate carboxylase large chain (453 aa).

Positions 1–2 are excised as a propeptide; the sequence is MS. Proline 3 bears the N-acetylproline mark. Lysine 14 carries the post-translational modification N6,N6,N6-trimethyllysine. Residues asparagine 123 and threonine 173 each coordinate substrate. Lysine 175 acts as the Proton acceptor in catalysis. A substrate-binding site is contributed by lysine 177. Mg(2+) contacts are provided by lysine 201, aspartate 203, and glutamate 204. Lysine 201 carries the N6-carboxylysine modification. Residue histidine 294 is the Proton acceptor of the active site. Substrate contacts are provided by arginine 295, histidine 327, and serine 379.

Belongs to the RuBisCO large chain family. Type I subfamily. Heterohexadecamer of 8 large chains and 8 small chains; disulfide-linked. The disulfide link is formed within the large subunit homodimers. Mg(2+) serves as cofactor. In terms of processing, the disulfide bond which can form in the large chain dimeric partners within the hexadecamer appears to be associated with oxidative stress and protein turnover.

Its subcellular location is the plastid. The protein localises to the chloroplast. The enzyme catalyses 2 (2R)-3-phosphoglycerate + 2 H(+) = D-ribulose 1,5-bisphosphate + CO2 + H2O. It carries out the reaction D-ribulose 1,5-bisphosphate + O2 = 2-phosphoglycolate + (2R)-3-phosphoglycerate + 2 H(+). RuBisCO catalyzes two reactions: the carboxylation of D-ribulose 1,5-bisphosphate, the primary event in carbon dioxide fixation, as well as the oxidative fragmentation of the pentose substrate in the photorespiration process. Both reactions occur simultaneously and in competition at the same active site. The polypeptide is Ribulose bisphosphate carboxylase large chain (Cruciata glabra (Slender crosswort)).